The sequence spans 284 residues: 4-diphosphocytidyl-2-C-methyl-D-erythritol kinase (284 aa).

Lys-13 is an active-site residue. 96-106 (PMGGGLGGGSS) is an ATP binding site. Asp-138 is a catalytic residue.

This sequence belongs to the GHMP kinase family. IspE subfamily.

It catalyses the reaction 4-CDP-2-C-methyl-D-erythritol + ATP = 4-CDP-2-C-methyl-D-erythritol 2-phosphate + ADP + H(+). It participates in isoprenoid biosynthesis; isopentenyl diphosphate biosynthesis via DXP pathway; isopentenyl diphosphate from 1-deoxy-D-xylulose 5-phosphate: step 3/6. In terms of biological role, catalyzes the phosphorylation of the position 2 hydroxy group of 4-diphosphocytidyl-2C-methyl-D-erythritol. The sequence is that of 4-diphosphocytidyl-2-C-methyl-D-erythritol kinase from Chromobacterium violaceum (strain ATCC 12472 / DSM 30191 / JCM 1249 / CCUG 213 / NBRC 12614 / NCIMB 9131 / NCTC 9757 / MK).